A 212-amino-acid chain; its full sequence is Riboflavin kinase (212 aa).

Positions 1 to 87 (MKKSNLDLLI…HEELSDALYR (87 aa)) are H-T-H motif-like. A riboflavin kinase region spans residues 88-212 (GIIIGEVVSG…DGDRIRIKTL (125 aa)). 97–102 (GIGEGA) serves as a coordination point for CDP. Residues T124 and N126 each contribute to the Mg(2+) site. FMN contacts are provided by T180 and E188. 193 to 196 (VNLR) contacts CDP.

The protein belongs to the archaeal riboflavin kinase family. It depends on Mg(2+) as a cofactor.

The catalysed reaction is riboflavin + CTP = CDP + FMN + H(+). It participates in cofactor biosynthesis; FMN biosynthesis; FMN from riboflavin (CTP route): step 1/1. Its function is as follows. Catalyzes the CTP-dependent phosphorylation of riboflavin (vitamin B2) to form flavin mononucleotide (FMN). The chain is Riboflavin kinase (ribK) from Pyrococcus furiosus (strain ATCC 43587 / DSM 3638 / JCM 8422 / Vc1).